Consider the following 229-residue polypeptide: Casparian strip membrane protein 1 (229 aa).

The Cytoplasmic segment spans residues 1–67; that stretch reads MSTSEAGAAA…FRRADRGSRC (67 aa). A helical transmembrane segment spans residues 68 to 88; it reads VALLDFVLRVAAFGPALAAAI. Over 89–115 the chain is Extracellular; sequence ATGTSDETLSVFTQFFQFHARFDDFPA. The chain crosses the membrane as a helical span at residues 116–136; the sequence is LLFFMVANAIAAGYLVLSLPF. Topologically, residues 137–157 are cytoplasmic; sequence SAVIVLRPQAIGLRHLLLVCD. The helical transmembrane segment at 158–178 threads the bilayer; that stretch reads MIIAALLTAAAAAAAAIVDLA. The Extracellular segment spans residues 179 to 205; it reads HSGNLRANWVPICMQFHGFCQRTSGAV. The helical transmembrane segment at 206–226 threads the bilayer; the sequence is VGSFLAVLVLLFLVILAAFAI. Over 227–229 the chain is Cytoplasmic; it reads RKR.

This sequence belongs to the Casparian strip membrane proteins (CASP) family. Homodimer and heterodimers.

It localises to the cell membrane. Functionally, regulates membrane-cell wall junctions and localized cell wall deposition. Required for establishment of the Casparian strip membrane domain (CSD) and the subsequent formation of Casparian strips, a cell wall modification of the root endodermis that determines an apoplastic barrier between the intraorganismal apoplasm and the extraorganismal apoplasm and prevents lateral diffusion. This is Casparian strip membrane protein 1 from Sorghum bicolor (Sorghum).